Consider the following 1130-residue polypeptide: MSRSPRPHGTHEPAVGVTRPFVRQSHPEIAAWPAPPPAHQLGCLSGNVRTPVGGPAPPSPVLRRAPSGPISPSPISPVSQHSRASSRHDIDNTSLLSILKLSHVARESSRNTSRNNSPQPAGRETELKRKIQTLEETVAEYERQKYNVMGTFSEYRERVAERERKLEAEYSGKIIALSEEVLGAKKDFEARMKSFQALQDKFEREKEQALEKLRKEHQKEIQVLEQRFSDTQLLNLEQKYIIEIQRLEEERKSLRTEKERLGETFEMKLRRAQSLYETELTAAKMLYTKELEALRDHEEALKEELLARQDEFHDRLQELQLQSKRSREDLVSCKNDVTALEKKLHNKEKEVQTLTKELDQVKTETNDKIRRLTEVTSEFAEYRKKFQQQEEELRRKARLLTVVEAAKEKLESVISDLQVEVKALKNKVEFLEKERENLQSQSESQTQLQSSQVDALEAVLHSVTKEKETTKEHYEGLLLKERQQAESREHAMKKEFSCKLNELEEQYTSLKEELEESARLDKDELREASEIEIQALRTEKSILAAEIRVLTQKIEDEEQDDITEQLAKIVEDTSQLTRTLEEYRERITGKDAEILNLRKQLEKEISHTEDRNRLLHENTQKELEAHKETHTETVRVLEAEIDQFKSAFENEQEYGKEKSAKIRELEAQNKTLLSEMEKVKHVAENLEAFTSDKDNLLEELESKNKNIEHLKQEIAQLNEKISTKETEKDSELEKTIAQLEIDNSSKSDQIEKLHLRVNDMLDQMGTIKDELVKKNEEIKTISAKTAQLLESNTVESETKLASVTEEREKEIQSFQTQISEKDNEVLTKAERINELETCLKEREVELTGMRTKLDDMTQQLNEETTVVLFDNSIQEKIDEKEATINEMNERLKSRENEIAKLHEEMYMQKTQNEKRNEEQSKLFQELMFEKEQLEAEKAEQSHIEAEVEQVFQADKESKWKEQIEDLENALQRKNELIQQLQDRQTDESTSEPHTKKRMSITSHGVFQNFVSQMKDKREEASEKRTRKEAEKKAEKEKEKAEKAAKEAAKELAREKSPARAKSPSILTRLRDRSPAKSKSDNLESTPSSSSRNLLSPFDAEKRMERSSPSQQLFSRTKKDSSSEKRPAWKF.

Disordered stretches follow at residues 1-92 (MSRS…DIDN), 104-129 (VARESSRNTSRNNSPQPAGRETELKR), and 974-1130 (NELI…AWKF). 2 coiled-coil regions span residues 121–779 (AGRE…EEIK) and 805–1061 (EERE…ARAK). Basic and acidic residues predominate over residues 983–993 (RQTDESTSEPH). Positions 999-1011 (SITSHGVFQNFVS) are enriched in polar residues. Composition is skewed to basic and acidic residues over residues 1013 to 1057 (MKDK…EKSP) and 1068 to 1081 (RLRDRSPAKSKSDN). Residues 1082-1095 (LESTPSSSSRNLLS) are compositionally biased toward low complexity. Residues 1116 to 1130 (TKKDSSSEKRPAWKF) are compositionally biased toward basic and acidic residues.

This chain is Putative protein tag-278 (tag-278), found in Caenorhabditis elegans.